We begin with the raw amino-acid sequence, 27 residues long: Metalloproteinase inhibitor 1 (27 aa).

Over residues I1–E12 the composition is skewed to acidic residues. Residues I1–Q27 are disordered.

Functionally, metalloproteinase inhibitor, active on a globulinase from L.albus seeds, thermolysin and gelatinase B. This Lupinus albus (White lupine) protein is Metalloproteinase inhibitor 1.